The chain runs to 382 residues: Galactokinase (382 aa).

34-37 (EHTD) serves as a coordination point for substrate. 124–130 (GAGLSSS) serves as a coordination point for ATP. Mg(2+) is bound by residues Ser-130 and Glu-162. Asp-174 acts as the Proton acceptor in catalysis. Tyr-223 serves as a coordination point for substrate.

This sequence belongs to the GHMP kinase family. GalK subfamily.

It is found in the cytoplasm. The catalysed reaction is alpha-D-galactose + ATP = alpha-D-galactose 1-phosphate + ADP + H(+). It functions in the pathway carbohydrate metabolism; galactose metabolism. Functionally, catalyzes the transfer of the gamma-phosphate of ATP to D-galactose to form alpha-D-galactose-1-phosphate (Gal-1-P). This Shigella dysenteriae serotype 1 (strain Sd197) protein is Galactokinase.